The following is a 142-amino-acid chain: Transcription antitermination protein NusB (142 aa).

It belongs to the NusB family.

In terms of biological role, involved in transcription antitermination. Required for transcription of ribosomal RNA (rRNA) genes. Binds specifically to the boxA antiterminator sequence of the ribosomal RNA (rrn) operons. The sequence is that of Transcription antitermination protein NusB from Actinobacillus succinogenes (strain ATCC 55618 / DSM 22257 / CCUG 43843 / 130Z).